The sequence spans 87 residues: Small ribosomal subunit protein bS20 (87 aa).

The segment at 1–27 (MANIKSAKKRAVTSEKRRKHNASRRSM) is disordered.

It belongs to the bacterial ribosomal protein bS20 family.

Its function is as follows. Binds directly to 16S ribosomal RNA. The sequence is that of Small ribosomal subunit protein bS20 from Erwinia tasmaniensis (strain DSM 17950 / CFBP 7177 / CIP 109463 / NCPPB 4357 / Et1/99).